Consider the following 741-residue polypeptide: 1,4-alpha-glucan branching enzyme GlgB (741 aa).

Asp420 functions as the Nucleophile in the catalytic mechanism. The active-site Proton donor is the Glu473.

Belongs to the glycosyl hydrolase 13 family. GlgB subfamily. Monomer.

It carries out the reaction Transfers a segment of a (1-&gt;4)-alpha-D-glucan chain to a primary hydroxy group in a similar glucan chain.. It functions in the pathway glycan biosynthesis; glycogen biosynthesis. Catalyzes the formation of the alpha-1,6-glucosidic linkages in glycogen by scission of a 1,4-alpha-linked oligosaccharide from growing alpha-1,4-glucan chains and the subsequent attachment of the oligosaccharide to the alpha-1,6 position. This Pseudomonas syringae pv. tomato (strain ATCC BAA-871 / DC3000) protein is 1,4-alpha-glucan branching enzyme GlgB.